The chain runs to 834 residues: MAP kinase phosphatase with leucine-rich repeats protein 1 (834 aa).

Residues 1–103 (MIFKKLFSKG…GSGTTKESKK (103 aa)) are disordered. Residues 36-78 (GSGTNTNGLSNSTTNPSSIHSTPTTPTTTASTNLTNSNKLSTL) are compositionally biased toward low complexity. Residues 79-98 (APITNGNRSLRGSKDGSGTT) show a composition bias toward polar residues. LRR repeat units lie at residues 160–181 (ELRSLILDFNKITEIPEQIGLL), 183–204 (NLKHLSLAANQLSQVPEFLSQL), 206–226 (SLESLELGINQFTSFPLNICK), 229–251 (SLTLLRLETNNIKSLPDDFINLE), 252–273 (NLKDLSLLDNQLKEIPDSLPNN), 274–292 (IEKLNLGCNDIINSYSKSL), 298–319 (SLTTLNLSENKIEVLDESLSCL), 321–342 (NVKTLILDCNMIKVIPGSVLGS), 345–366 (SLVTLNLPHNFISDLPAEIVTL), and 368–389 (NLRIIDLRGNNFEFCKNYPSSE). The disordered stretch occupies residues 503–584 (YEKQENDENN…ENPLKESQGK (82 aa)). The segment covering 511–536 (NNSVTLETTTTISIASDNTDEASIQI) has biased composition (polar residues). 2 stretches are compositionally biased toward basic and acidic residues: residues 538–554 (QKEDGDKENLENDDKLL) and 569–582 (KQQEQQENPLKESQ). Residues 555–615 (QESFSENNNN…IRLEKIKYQE (61 aa)) adopt a coiled-coil conformation. One can recognise a Tyrosine-protein phosphatase domain in the interval 695–834 (VPDLIIDKLY…LKKFEKDLSK (140 aa)). Catalysis depends on Cys778, which acts as the Phosphocysteine intermediate.

It belongs to the protein-tyrosine phosphatase family. Non-receptor class dual specificity subfamily.

It carries out the reaction O-phospho-L-tyrosyl-[protein] + H2O = L-tyrosyl-[protein] + phosphate. The catalysed reaction is O-phospho-L-seryl-[protein] + H2O = L-seryl-[protein] + phosphate. The enzyme catalyses O-phospho-L-threonyl-[protein] + H2O = L-threonyl-[protein] + phosphate. Probable phosphatase with dual specificity toward Ser/Thr and Tyr-containing proteins. Dephosphorylates pNPP, in vitro. Essential for proper regulation of erkB (erk2) and optimal motility during development. This chain is MAP kinase phosphatase with leucine-rich repeats protein 1 (mpl1), found in Dictyostelium discoideum (Social amoeba).